Reading from the N-terminus, the 182-residue chain is Ribosome-recycling factor (182 aa).

The protein belongs to the RRF family.

It localises to the cytoplasm. Its function is as follows. Responsible for the release of ribosomes from messenger RNA at the termination of protein biosynthesis. May increase the efficiency of translation by recycling ribosomes from one round of translation to another. The polypeptide is Ribosome-recycling factor (Cyanothece sp. (strain PCC 7425 / ATCC 29141)).